Consider the following 417-residue polypeptide: Interferon regulatory factor 3 (417 aa).

At T3 the chain carries Phosphothreonine. The IRF tryptophan pentad repeat DNA-binding region spans 5–111 (KPRILPWLIS…DPHKIYEFVN (107 aa)). S14 carries the phosphoserine modification. T75 carries the post-translational modification Phosphothreonine. 2 positions are modified to phosphoserine: S97 and S123. Disordered regions lie at residues 111 to 134 (NSGV…TSDT) and 147 to 170 (DLSP…LQSP). A mediates interaction with ZDHHC11 region spans residues 140–417 (EKLLSDMDLS…LQDLAEDMDF (278 aa)). S184 is subject to Phosphoserine. A Glycyl lysine isopeptide (Lys-Gly) (interchain with G-Cter in ISG15) cross-link involves residue K189. An interaction with HERC5 region spans residues 196–356 (EDWEFEVTAF…SWPQDQPWIK (161 aa)). Phosphothreonine is present on T249. A disulfide bridge connects residues C263 and C285. Glycyl lysine isopeptide (Lys-Gly) (interchain with G-Cter in ISG15) cross-links involve residues K356 and K362. At K362 the chain carries N6-acetyllysine. A Phosphoserine modification is found at S381. Position 382 is a diphosphoserine (S382). S382 bears the Phosphoserine; by TBK1 mark. A Phosphoserine; by IKKE modification is found at S392. S394 carries the phosphoserine modification. A Phosphothreonine modification is found at T400.

This sequence belongs to the IRF family. As to quaternary structure, monomer. Homodimer; phosphorylation-induced. Interacts (when phosphorylated) with CREBBP. Interacts with MAVS (via phosphorylated pLxIS motif). Interacts with TICAM1 (via phosphorylated pLxIS motif). Interacts with STING1 (via phosphorylated pLxIS motif). Interacts with IKBKE and TBK1. Interacts with TICAM2. Interacts with RBCK1. Interacts with HERC5. Interacts with DDX3X; the interaction allows the phosphorylation and activation of IRF3 by IKBKE. Interacts with TRIM21 and ULK1, in the presence of TRIM21; this interaction leads to IRF3 degradation by autophagy. Interacts with RIOK3; RIOK3 probably mediates the interaction of TBK1 with IRF3. Interacts with ILRUN; the interaction inhibits IRF3 binding to its DNA consensus sequence. Interacts with LYAR; this interaction impairs IRF3 DNA-binding activity. Interacts with TRAF3. Interacts with ZDHHC11; ZDHHC11 recruits IRF3 to STING1 upon DNA virus infection and thereby promotes IRF3 activation. Interacts with HSP90AA1; the interaction mediates IRF3 association with TOMM70. Interacts with BCL2; the interaction decreases upon Sendai virus infection. Interacts with BAX; the interaction is direct, increases upon virus infection and mediates the formation of the apoptosis complex TOMM70:HSP90AA1:IRF3:BAX. Interacts with DDX56. Interacts with NBR1. In terms of processing, constitutively phosphorylated on many Ser/Thr residues. Activated following phosphorylation by TBK1 and IKBKE. Innate adapter proteins, such as MAVS, STING1 or TICAM1, are first activated by viral RNA, cytosolic DNA, and bacterial lipopolysaccharide (LPS), respectively, leading to activation of the kinases TBK1 and IKBKE. These kinases then phosphorylate the adapter proteins on the pLxIS motif, leading to recruitment of IRF3, thereby licensing IRF3 for phosphorylation by TBK1. Phosphorylation at Ser-382 is followed by pyrophosphorylation at the same residue, promoting phosphorylation at Ser-392. Phosphorylated IRF3 dissociates from the adapter proteins, dimerizes, and then enters the nucleus to induce IFNs. Pyrophosphorylated by UAP1 following phosphorylation at Ser-382 by TBK1. Pyrophosphorylation promotes subsequent phosphorylation at Ser-392, leading to homodimerization of IRF3. Post-translationally, acetylation at Lys-362 by KAT8 inhibits recruimtent to promoters and transcription factor activity. Acetylation by KAT8 is promoted by phosphorylation at Ser-392. In terms of processing, ubiquitinated; ubiquitination involves RBCK1 leading to proteasomal degradation. Polyubiquitinated; ubiquitination involves TRIM21 leading to proteasomal degradation. Ubiquitinated by UBE3C, leading to its degradation. Deubiquitinated by USP5 on both 'Lys-48'-linked unanchored and 'Lys-63'-linked anchored polyubiquitin, leading to inhibition of anti-RNA viral innate immunity. ISGylated by HERC5 resulting in sustained IRF3 activation and in the inhibition of IRF3 ubiquitination by disrupting PIN1 binding. The phosphorylation state of IRF3 does not alter ISGylation. Post-translationally, proteolytically cleaved by apoptotic caspases during apoptosis, leading to its inactivation. Cleavage by CASP3 during virus-induced apoptosis inactivates it, preventing cytokine overproduction.

The protein resides in the cytoplasm. It localises to the nucleus. It is found in the mitochondrion. In the absence of viral infection, maintained as a monomer in an autoinhibited state. Phosphorylation by TBK1 and IKBKE disrupts this autoinhibition leading to the liberation of the DNA-binding and dimerization activities and its nuclear localization where it can activate type I IFN and ISG genes. Phosphorylation and activation follow the following steps: innate adapter proteins, such as MAVS, STING1 or TICAM1, are first activated by viral RNA, cytosolic DNA and bacterial lipopolysaccharide (LPS), respectively, leading to activation of the kinases TBK1 and IKBKE. These kinases then phosphorylate the adapter proteins on their pLxIS motif, leading to recruitment of IRF3, thereby licensing IRF3 for phosphorylation by TBK1. Phosphorylated IRF3 dissociates from the adapter proteins, dimerizes, and then enters the nucleus to induce IFNs. In terms of biological role, key transcriptional regulator of type I interferon (IFN)-dependent immune responses which plays a critical role in the innate immune response against DNA and RNA viruses. Regulates the transcription of type I IFN genes (IFN-alpha and IFN-beta) and IFN-stimulated genes (ISG) by binding to an interferon-stimulated response element (ISRE) in their promoters. Acts as a more potent activator of the IFN-beta (IFNB) gene than the IFN-alpha (IFNA) gene and plays a critical role in both the early and late phases of the IFNA/B gene induction. Found in an inactive form in the cytoplasm of uninfected cells and following viral infection, double-stranded RNA (dsRNA), or toll-like receptor (TLR) signaling, is phosphorylated by IKBKE and TBK1 kinases. This induces a conformational change, leading to its dimerization and nuclear localization and association with CREB binding protein (CREBBP) to form dsRNA-activated factor 1 (DRAF1), a complex which activates the transcription of the type I IFN and ISG genes. Can activate distinct gene expression programs in macrophages and can induce significant apoptosis in primary macrophages. This is Interferon regulatory factor 3 (IRF3) from Bos taurus (Bovine).